Here is a 382-residue protein sequence, read N- to C-terminus: Mannitol-1-phosphate 5-dehydrogenase (382 aa).

Position 3-14 (3-14 (ALHFGAGNIGRG)) interacts with NAD(+). K269 carries the post-translational modification N6-acetyllysine.

The protein belongs to the mannitol dehydrogenase family.

The enzyme catalyses D-mannitol 1-phosphate + NAD(+) = beta-D-fructose 6-phosphate + NADH + H(+). The chain is Mannitol-1-phosphate 5-dehydrogenase from Escherichia coli (strain K12 / MC4100 / BW2952).